Reading from the N-terminus, the 532-residue chain is Autophagy-related protein 21 (532 aa).

WD repeat units follow at residues 265 to 310 (AHDS…KPFN) and 321 to 360 (HNIA…HESF). Positions 317–321 (LRRGH) match the L/FRRG motif motif. The tract at residues 360 to 380 (FEYEEDPANESDPDDEDRSSE) is disordered. Over residues 361–378 (EYEEDPANESDPDDEDRS) the composition is skewed to acidic residues.

The protein belongs to the WD repeat PROPPIN family.

It localises to the cytoplasm. The protein resides in the membrane. Its subcellular location is the vacuole membrane. Required for cytoplasm to vacuole transport (Cvt) vesicles formation and mitophagy. Involved in binding of phosphatidylethanolamine to ATG8 and in recruitment of ATG8 and ATG5 to the pre-autophagosomal structure. Protects ATG8 from ARG4-mediated cleavage. The sequence is that of Autophagy-related protein 21 (ATG21) from Debaryomyces hansenii (strain ATCC 36239 / CBS 767 / BCRC 21394 / JCM 1990 / NBRC 0083 / IGC 2968) (Yeast).